Consider the following 338-residue polypeptide: Mitochondrial glutathione transporter SLC25A40 (338 aa).

Solcar repeat units lie at residues 13–131 (VTPL…LSAL), 139–223 (NETC…LKKW), and 233–327 (PTFM…GKAF). The next 6 membrane-spanning stretches (helical) occupy residues 19–39 (MLAS…LDVV), 103–123 (LWSG…IYFT), 142–162 (CIPI…ISPL), 199–220 (WAPT…YEIL), 239–259 (FTSG…FDVV), and 298–318 (GLFS…AIMI).

It belongs to the mitochondrial carrier (TC 2.A.29) family.

Its subcellular location is the mitochondrion inner membrane. It carries out the reaction glutathione(in) = glutathione(out). Its function is as follows. Probable mitochondrial transporter required for glutathione import into mitochondria. Glutathione, which plays key roles in oxidative metabolism, is produced exclusively in the cytosol and is imported in many organelles. Mitochondrial glutathione is required for the activity and stability of proteins containing iron-sulfur clusters, as well as erythropoiesis. This is Mitochondrial glutathione transporter SLC25A40 from Homo sapiens (Human).